The primary structure comprises 154 residues: Aspartate carbamoyltransferase regulatory chain (154 aa).

Zn(2+)-binding residues include C109, C114, C138, and C141.

It belongs to the PyrI family. Contains catalytic and regulatory chains. Requires Zn(2+) as cofactor.

Involved in allosteric regulation of aspartate carbamoyltransferase. The polypeptide is Aspartate carbamoyltransferase regulatory chain (Aeromonas salmonicida (strain A449)).